A 4168-amino-acid chain; its full sequence is Centrosome-associated protein ALMS1 (4168 aa).

Residues 1 to 29 show a composition bias toward acidic residues; the sequence is MEPEDLPWPGELEEEEEEEEEEEEEEEEA. A disordered region spans residues 1–69; that stretch reads MEPEDLPWPG…YGPQHLESID (69 aa). The span at 30–40 shows a compositional bias: low complexity; the sequence is AAAAAANVDDV. The segment covering 49–58 has biased composition (basic and acidic residues); the sequence is EAGRELDSDS. The residue at position 464 (S464) is a Phosphoserine. Tandem repeats lie at residues 539 to 585, 586 to 632, 633 to 679, 680 to 726, 727 to 774, 775 to 821, 822 to 871, 872 to 918, 919 to 965, 966 to 1013, 1014 to 1060, 1061 to 1107, 1108 to 1155, 1156 to 1202, 1203 to 1249, 1250 to 1297, 1298 to 1344, 1345 to 1392, 1393 to 1439, 1440 to 1486, 1487 to 1534, 1535 to 1581, 1582 to 1628, 1629 to 1675, 1676 to 1722, 1723 to 1769, 1770 to 1816, 1817 to 1861, 1862 to 1906, 1907 to 1951, 1952 to 1999, 2060 to 2105, 2106 to 2152, and 2153 to 2200. The 34 X 47 AA approximate tandem repeat stretch occupies residues 539–2200; that stretch reads QKTLADTHLT…HGENHKLVSE (1662 aa). Disordered stretches follow at residues 558–579 and 606–625; these read PEPADQKTATPTVLSSSHSHRG and GLADQTTGMSTLTSTSYSHR. Composition is skewed to polar residues over residues 564–574 and 609–622; these read KTATPTVLSSS and DQTTGMSTLTSTSY. Disordered regions lie at residues 699–718 and 735–769; these read SGPADQKTGTATVLSTPHSH and QTEETLTKVSATPGPADQKTEIPAVQSSSYSQREK. Residues 705–715 are compositionally biased toward polar residues; the sequence is KTGTATVLSTP. The disordered stretch occupies residues 841-865; that stretch reads SGPADGKTGTPAVTSTSSASSSLGE. Disordered stretches follow at residues 946-969, 983-1007, and 1027-1055; these read GTPTVSSNSHSHSEKSSVFYQQEL, AIPGLTDQKTVPTPTVPSGSFSHRE, and LKVSTGPGPADQKTEIPAVQSSSYPQREK. A compositionally biased stretch (polar residues) spans 989 to 1003; sequence DQKTVPTPTVPSGSF. S1189 carries the phosphoserine modification. The disordered stretch occupies residues 1221 to 1241; the sequence is VLGPADQKTGTPTPTSASYSH. Residues 1228-1240 are compositionally biased toward polar residues; that stretch reads KTGTPTPTSASYS. Residues 1786–1806 form a disordered region; the sequence is SNVPGPADQKTGVSTVTSTSY. The segment covering 1796-1806 has biased composition (low complexity); the sequence is TGVSTVTSTSY. At S2143 the chain carries Phosphoserine. Disordered regions lie at residues 2456–2477 and 2600–2621; these read ITDSREEEGVSESEDGGGSSVD and HPCAFRSAGPSEMTRGRQNPSS. S2466 carries the phosphoserine modification. The residue at position 2632 (S2632) is a Phosphoserine. Disordered stretches follow at residues 2753-2828, 2892-2912, 3283-3310, 3389-3426, 3566-3594, and 3643-3704; these read HFTE…STRA, KAPRADDHVRKHHSPSPQHQD, RQIPPSPDSKSDTTVESSHSGSNDAIAP, EAAQAKEKESLQKDTADSSAAAAAEHSAQVGDPEMKNL, QVRDYPKHNGQISDPQRDQKVTPEQTTQH, and SLQV…HRAG. A compositionally biased stretch (basic and acidic residues) spans 2754–2766; it reads FTEEQNPPRDLKQ. The segment covering 2767-2779 has biased composition (polar residues); sequence KTSSPSSFKMHSN. 2 stretches are compositionally biased toward basic and acidic residues: residues 2780-2793 and 2800-2816; these read SQDKEVTILAEGRR and VDFERSFQEEKPLERSD. S2805 is modified (phosphoserine). The segment covering 2817–2828 has biased composition (polar residues); the sequence is FTGSHSEPSTRA. The segment covering 3294 to 3305 has biased composition (polar residues); the sequence is DTTVESSHSGSN. Basic and acidic residues predominate over residues 3392 to 3404; the sequence is QAKEKESLQKDTA. Low complexity predominate over residues 3405–3416; sequence DSSAAAAAEHSA. Composition is skewed to basic and acidic residues over residues 3649 to 3664 and 3680 to 3694; these read STHDDSRGERSVKEWS and KSLEKSHKNTGELKK. Residues 3695-3704 show a composition bias toward basic residues; it reads SKVLSHHRAG. The segment at 4036–4167 is ALMS motif; that stretch reads TLQESLQFHR…NQLLGRKVPW (132 aa).

Belongs to the ALMS1 family. Expressed in all tissues tested including adipose and pancreas. Expressed by beta-cells of the islets in the pancreas (at protein level).

It is found in the cytoplasm. Its subcellular location is the cytoskeleton. The protein localises to the microtubule organizing center. It localises to the centrosome. The protein resides in the cilium basal body. It is found in the spindle pole. Its function is as follows. Involved in PCM1-dependent intracellular transport. Required, directly or indirectly, for the localization of NCAPD2 to the proximal ends of centrioles. Required for proper formation and/or maintenance of primary cilia (PC), microtubule-based structures that protrude from the surface of epithelial cells. In Homo sapiens (Human), this protein is Centrosome-associated protein ALMS1 (ALMS1).